Here is a 72-residue protein sequence, read N- to C-terminus: Translation initiation factor IF-1 (72 aa).

Residues 1–72 enclose the S1-like domain; it reads MSKQDVIEFD…TKGRITYRGK (72 aa).

Belongs to the IF-1 family. As to quaternary structure, component of the 30S ribosomal translation pre-initiation complex which assembles on the 30S ribosome in the order IF-2 and IF-3, IF-1 and N-formylmethionyl-tRNA(fMet); mRNA recruitment can occur at any time during PIC assembly.

Its subcellular location is the cytoplasm. One of the essential components for the initiation of protein synthesis. Stabilizes the binding of IF-2 and IF-3 on the 30S subunit to which N-formylmethionyl-tRNA(fMet) subsequently binds. Helps modulate mRNA selection, yielding the 30S pre-initiation complex (PIC). Upon addition of the 50S ribosomal subunit IF-1, IF-2 and IF-3 are released leaving the mature 70S translation initiation complex. This chain is Translation initiation factor IF-1, found in Hydrogenovibrio crunogenus (strain DSM 25203 / XCL-2) (Thiomicrospira crunogena).